A 65-amino-acid polypeptide reads, in one-letter code: GKEGYPADSKGCKVTCFFTGVGYCDKECKLKKASSGYCAWPACYCYGLPDSASVWDSATNKCGKK.

The LCN-type CS-alpha/beta domain maps to 2–63; sequence KEGYPADSKG…VWDSATNKCG (62 aa). 4 cysteine pairs are disulfide-bonded: cysteine 12/cysteine 62, cysteine 16/cysteine 38, cysteine 24/cysteine 43, and cysteine 28/cysteine 45. Position 62 is a cysteine amide (cysteine 62).

The protein belongs to the long (4 C-C) scorpion toxin superfamily. Sodium channel inhibitor family. Alpha subfamily. As to expression, expressed by the venom gland.

The protein localises to the secreted. Its function is as follows. Alpha toxins bind voltage-independently at site-3 of sodium channels (Nav) and inhibit the inactivation of the activated channels, thereby blocking neuronal transmission. This toxin is toxic to frogs but non-toxic to insect larvae (T.molitor), mammals (rats) and crustaceans (crabs) at the doses assayed. The protein is Beta-toxin Tf4a of Tityus fasciolatus (Central Brazilian scorpion).